A 252-amino-acid chain; its full sequence is MNKFEDIRGVAFDLDGTLVDSAPGLAAAVDMALYALELPVAGEERVITWIGNGADVLMERALTWARQERATQRKTMGKPPVDDDIPAEEQVRILRKLFDRYYGEVAEEGTFLFPHVADTLGALQAKGLPLGLVTNKPTPFVAPLLEALDIAKYFSVVIGGDDVQNKKPHPDPLLLVAERMGIAPQQMLFVGDSRNDIQAAKAAGCPSVGLTYGYNYGEAIDLSQPDVIYQSINDLLPALGLPHSENQESKND.

Residue aspartate 13 is the Nucleophile of the active site. Positions 13, 15, and 192 each coordinate Mg(2+). Residue 13–15 coordinates substrate; that stretch reads DLD.

The protein belongs to the HAD-like hydrolase superfamily. CbbY/CbbZ/Gph/YieH family. In terms of assembly, monomer. Chloride is required as a cofactor. Mg(2+) serves as cofactor.

The catalysed reaction is 2-phosphoglycolate + H2O = glycolate + phosphate. It participates in organic acid metabolism; glycolate biosynthesis; glycolate from 2-phosphoglycolate: step 1/1. Specifically catalyzes the dephosphorylation of 2-phosphoglycolate (2P-Gly). Is involved in the dissimilation of the intracellular 2-phosphoglycolate formed during the DNA repair of 3'-phosphoglycolate ends, a major class of DNA lesions induced by oxidative stress. The sequence is that of Phosphoglycolate phosphatase (gph) from Escherichia coli (strain K12).